A 562-amino-acid polypeptide reads, in one-letter code: Phosphoglucomutase-1 (562 aa).

The residue at position 1 (M1) is an N-acetylmethionine. K16 bears the N6-acetyllysine mark. R23 contributes to the alpha-D-glucose 1,6-bisphosphate binding site. A Phosphothreonine modification is found at T115. S117 is an alpha-D-glucose 1,6-bisphosphate binding site. The active-site Phosphoserine intermediate is the S117. S117 contributes to the Mg(2+) binding site. 2 positions are modified to phosphoserine: S117 and S134. Residue T185 is modified to Phosphothreonine. S206 and S213 each carry phosphoserine. Positions 288, 290, and 292 each coordinate Mg(2+). Residues D292 and R293 each coordinate alpha-D-glucose 1,6-bisphosphate. K349 carries the post-translational modification N6-acetyllysine. A Phosphotyrosine modification is found at Y353. An alpha-D-glucose 1,6-bisphosphate-binding site is contributed by T357. A Phosphoserine modification is found at S369. Residues E376, S378, and K389 each contribute to the alpha-D-glucose 1,6-bisphosphate site. S378 carries the post-translational modification Phosphoserine. K419 is subject to N6-succinyllysine. T467 is subject to Phosphothreonine; by PAK1. Residues S477, S485, and S505 each carry the phosphoserine modification. The residue at position 507 (T507) is a Phosphothreonine. Phosphoserine is present on residues S509 and S541.

This sequence belongs to the phosphohexose mutase family. As to quaternary structure, monomer. The cofactor is Mg(2+). Phosphorylation at Thr-467 by PAK1 significantly enhances enzymatic activity.

It is found in the cytoplasm. It catalyses the reaction alpha-D-glucose 1-phosphate = alpha-D-glucose 6-phosphate. The catalysed reaction is O-phospho-L-seryl-[protein] + alpha-D-glucose 1-phosphate = alpha-D-glucose 1,6-bisphosphate + L-seryl-[protein]. The enzyme catalyses alpha-D-glucose 1,6-bisphosphate + L-seryl-[protein] = O-phospho-L-seryl-[protein] + alpha-D-glucose 6-phosphate. Catalyzes the reversible isomerization of alpha-D-glucose 1-phosphate to alpha-D-glucose 6-phosphate. The mechanism proceeds via the intermediate compound alpha-D-glucose 1,6-bisphosphate. This enzyme participates in both the breakdown and synthesis of glucose. The polypeptide is Phosphoglucomutase-1 (PGM1) (Macaca fascicularis (Crab-eating macaque)).